Here is a 144-residue protein sequence, read N- to C-terminus: Mercuric transport protein MerC (144 aa).

Topologically, residues 1–21 (MSAITRIIDKIGIVGTIVGSF) are cytoplasmic. A helical membrane pass occupies residues 22 to 42 (SCAMCFPAAASLGAAIGLGFL). Hg(2+) is bound by residues Cys23 and Cys26. Over 43-46 (SQWE) the chain is Periplasmic. A helical transmembrane segment spans residues 47–67 (GLFVQWLIPIFASVALLATLA). Residues 68–78 (GWFSHRQWQRT) are Cytoplasmic-facing. Residues 79–99 (LLGSIGPVLALVGVFGLTHHF) traverse the membrane as a helical segment. The Periplasmic segment spans residues 100 to 103 (LDKD). A helical membrane pass occupies residues 104-124 (LARVIFYTGLVVMFLVSIWDM). Over 125-144 (VNPANRRCATDGCETPAPRS) the chain is Cytoplasmic.

As to quaternary structure, monomer.

The protein localises to the cell inner membrane. Its activity is regulated as follows. Inhibited by the thiol-modifying reagent N-ethylmaleimide (NEM). Involved in mercuric ion uptake. This chain is Mercuric transport protein MerC, found in Acidithiobacillus ferrooxidans (Thiobacillus ferrooxidans).